Consider the following 411-residue polypeptide: NAD-dependent dihydropyrimidine dehydrogenase subunit PreA (411 aa).

Substrate-binding positions include N76 and 134-136 (NFS). The Nucleophile role is filled by C137. A substrate-binding site is contributed by 201–202 (NT). 4Fe-4S ferredoxin-type domains follow at residues 335 to 367 (VYPR…WSEK) and 369 to 398 (RTPH…LGEV). [4Fe-4S] cluster contacts are provided by C344, C347, C350, C354, C378, C381, C384, and C388.

The protein belongs to the dihydropyrimidine dehydrogenase family. As to quaternary structure, heterotetramer of 2 PreA and 2 PreT subunits. [4Fe-4S] cluster is required as a cofactor.

The enzyme catalyses 5,6-dihydrouracil + NAD(+) = uracil + NADH + H(+). The catalysed reaction is 5,6-dihydrothymine + NAD(+) = thymine + NADH + H(+). Its function is as follows. Involved in pyrimidine base degradation. Catalyzes physiologically the reduction of uracil to 5,6-dihydrouracil (DHU) by using NADH as a specific cosubstrate. It also catalyzes the reverse reaction and the reduction of thymine to 5,6-dihydrothymine (DHT). The polypeptide is NAD-dependent dihydropyrimidine dehydrogenase subunit PreA (preA) (Escherichia coli O157:H7).